The primary structure comprises 339 residues: uncharacterized protein (339 aa).

The first 29 residues, 1 to 29 (MIKQVCKNITICSLALSTALTVFPASSYA), serve as a signal peptide directing secretion.

Belongs to the aerolysin family.

This is an uncharacterized protein from Staphylococcus aureus (strain MRSA252).